A 149-amino-acid chain; its full sequence is Large ribosomal subunit protein bL9 (149 aa).

Belongs to the bacterial ribosomal protein bL9 family.

Functionally, binds to the 23S rRNA. The sequence is that of Large ribosomal subunit protein bL9 from Helicobacter pylori (strain J99 / ATCC 700824) (Campylobacter pylori J99).